Reading from the N-terminus, the 141-residue chain is MIINKVPKAHFDPVSDLFTKINNARKAKLLTVTTIASKLKIAILEILIKEGYLANYQVLENKTKTKKLVSFTLKYTQRRICSINGVKQISKPGLRIYRSFEKLPLVLNGLGIAIISTSDGVMTDKVARLKKIGGEILAYVW.

This sequence belongs to the universal ribosomal protein uS8 family. Part of the 30S ribosomal subunit. Contacts proteins S5 and S12.

Its function is as follows. One of the primary rRNA binding proteins, it binds directly to 16S rRNA central domain where it helps coordinate assembly of the platform of the 30S subunit. In Mycoplasma genitalium (strain ATCC 33530 / DSM 19775 / NCTC 10195 / G37) (Mycoplasmoides genitalium), this protein is Small ribosomal subunit protein uS8.